The primary structure comprises 294 residues: 1,4-dihydroxy-2-naphthoate octaprenyltransferase (294 aa).

The next 6 helical transmembrane spans lie at 35–55 (SAVW…VIGV), 103–123 (AGLA…ATCI), 140–160 (GFGE…GTEY), 166–186 (VDWV…SVLV), 220–240 (LLVA…WCAV), and 272–292 (GLAM…AGSV).

The protein belongs to the MenA family. Type 1 subfamily.

It is found in the cell membrane. It carries out the reaction an all-trans-polyprenyl diphosphate + 1,4-dihydroxy-2-naphthoate + H(+) = a 2-demethylmenaquinol + CO2 + diphosphate. The protein operates within quinol/quinone metabolism; menaquinone biosynthesis; menaquinol from 1,4-dihydroxy-2-naphthoate: step 1/2. Its function is as follows. Conversion of 1,4-dihydroxy-2-naphthoate (DHNA) to demethylmenaquinone (DMK). This is 1,4-dihydroxy-2-naphthoate octaprenyltransferase from Mycobacterium leprae (strain TN).